A 274-amino-acid chain; its full sequence is 2,3,4,5-tetrahydropyridine-2,6-dicarboxylate N-succinyltransferase (274 aa).

Substrate contacts are provided by R104 and D141.

This sequence belongs to the transferase hexapeptide repeat family. As to quaternary structure, homotrimer.

It localises to the cytoplasm. It catalyses the reaction (S)-2,3,4,5-tetrahydrodipicolinate + succinyl-CoA + H2O = (S)-2-succinylamino-6-oxoheptanedioate + CoA. Its pathway is amino-acid biosynthesis; L-lysine biosynthesis via DAP pathway; LL-2,6-diaminopimelate from (S)-tetrahydrodipicolinate (succinylase route): step 1/3. This Idiomarina loihiensis (strain ATCC BAA-735 / DSM 15497 / L2-TR) protein is 2,3,4,5-tetrahydropyridine-2,6-dicarboxylate N-succinyltransferase.